The sequence spans 844 residues: Leucine--tRNA ligase (844 aa).

Positions P39–H49 match the 'HIGH' region motif. The 'KMSKS' region motif lies at K621–S625. K624 is a binding site for ATP.

The protein belongs to the class-I aminoacyl-tRNA synthetase family.

It is found in the cytoplasm. It carries out the reaction tRNA(Leu) + L-leucine + ATP = L-leucyl-tRNA(Leu) + AMP + diphosphate. This chain is Leucine--tRNA ligase, found in Paracoccus denitrificans (strain Pd 1222).